The chain runs to 833 residues: Translation initiation factor IF-2 (833 aa).

A tr-type G domain is found at 331–501 (TRAPVVTVMG…LLIAEMQDLK (171 aa)). Positions 340-347 (GHVDHGKT) are G1. 340-347 (GHVDHGKT) provides a ligand contact to GTP. The tract at residues 365–369 (GITQH) is G2. Positions 387 to 390 (DTPG) are G3. GTP contacts are provided by residues 387–391 (DTPGH) and 441–444 (NKID). The interval 441–444 (NKID) is G4. The tract at residues 477–479 (SAL) is G5.

This sequence belongs to the TRAFAC class translation factor GTPase superfamily. Classic translation factor GTPase family. IF-2 subfamily.

The protein resides in the cytoplasm. Its function is as follows. One of the essential components for the initiation of protein synthesis. Protects formylmethionyl-tRNA from spontaneous hydrolysis and promotes its binding to the 30S ribosomal subunits. Also involved in the hydrolysis of GTP during the formation of the 70S ribosomal complex. This Rickettsia canadensis (strain McKiel) protein is Translation initiation factor IF-2.